A 942-amino-acid chain; its full sequence is Exopolysaccharide phosphotransferase SCO2592 (942 aa).

The protein belongs to the stealth family.

In Streptomyces coelicolor (strain ATCC BAA-471 / A3(2) / M145), this protein is Exopolysaccharide phosphotransferase SCO2592.